The following is a 701-amino-acid chain: MPREVPLERIRNIGIIAHIDAGKTTTTERILFYTGRTYKLGEVHEGTAVMDWMEQERERGITITAAATTAEWTVEGTPYRINIIDTPGHVDFTAEVERSLRVLDGGVVVFDAVAGVEPQSETVWRQADKYHVPRICFVNKMDRIGANFMRTVDMIRERLGAKPVPVQFPIGAEDRFRGIVDLITNKAVIYVDDQGKREELEAIPADVADEVERLRNEMIEAIAETDDELTLLYLEGEELSVEELRRALRKATIQGKLVPVLCGAALRNKGVQRLLDAVVYYLPSPVDIPPVRGTRPGQIAGDDGVEMITRPTSEDAPFTGLVFKIVSDPFVGKLAYFRVYSGKLETGSYVLNSTRNQRERIGRLLQMHANHREEIKEVYAGDIAAMVGPKQSYTGDTICDPNDPIVLESIRFPEPVIQLAIEPKTKADQDKLAVALGKLAEEDPTFRVFTDPETGQTIIAGMGELHLEVIVDRMRREYKVEANQGKPQVAYRESITVPADVDSKFVRQSGGKGQYGHVKLQVEPLERGKGFEFVNGIVGGVIPREYIPAVEAGVKEAMASGVIAGYPVVDIKVTLYDGSYHEVDSSEMAFKIAASMGLKEAVRKGRPILLEPVMKVEIVTPEDFLGAVLGDINSRRGHVEGMEARGNAQVIRAYVPLASMFGYTTDLRSATQGRATSSMEFAYYQPLPDALAKEIIEKRRG.

One can recognise a tr-type G domain in the interval 8–286; the sequence is ERIRNIGIIA…AVVYYLPSPV (279 aa). Residues 17–24, 85–89, and 139–142 each bind GTP; these read AHIDAGKT, DTPGH, and NKMD.

This sequence belongs to the TRAFAC class translation factor GTPase superfamily. Classic translation factor GTPase family. EF-G/EF-2 subfamily.

The protein resides in the cytoplasm. Its function is as follows. Catalyzes the GTP-dependent ribosomal translocation step during translation elongation. During this step, the ribosome changes from the pre-translocational (PRE) to the post-translocational (POST) state as the newly formed A-site-bound peptidyl-tRNA and P-site-bound deacylated tRNA move to the P and E sites, respectively. Catalyzes the coordinated movement of the two tRNA molecules, the mRNA and conformational changes in the ribosome. This is Elongation factor G from Roseiflexus castenholzii (strain DSM 13941 / HLO8).